The primary structure comprises 240 residues: Large ribosomal subunit protein bL25 (240 aa).

Disordered stretches follow at residues 1-20 and 220-240; these read MAEN…GPAR and PAAG…KGKK. Residues 220 to 229 show a composition bias toward low complexity; the sequence is PAAGAAPAKG. Positions 230-240 are enriched in basic and acidic residues; the sequence is GEAKGGDKGKK.

This sequence belongs to the bacterial ribosomal protein bL25 family. CTC subfamily. In terms of assembly, part of the 50S ribosomal subunit; part of the 5S rRNA/L5/L18/L25 subcomplex. Contacts the 5S rRNA. Binds to the 5S rRNA independently of L5 and L18.

In terms of biological role, this is one of the proteins that binds to the 5S RNA in the ribosome where it forms part of the central protuberance. This Anaeromyxobacter dehalogenans (strain 2CP-C) protein is Large ribosomal subunit protein bL25.